Consider the following 297-residue polypeptide: GATA transcription factor 24 (297 aa).

The region spanning 73–108 (GIENGDQLTLSFQGQVYVFDRVSPEKVQAVLLLLGG) is the Tify domain. The CCT domain occupies 143-185 (RLASLLRFREKRKGRNFDKTIRYTVRKEVALRMQRKKGQFTSA). The tract at residues 178-203 (KKGQFTSAKSSNDDSGSTGSDWGSNQ) is disordered. The span at 190 to 201 (DDSGSTGSDWGS) shows a compositional bias: low complexity. The GATA-type zinc finger occupies 213–269 (QKPEVLCRHCGTSEKSTPMMRRGPDGPRTLCNACGLMWANKGTLRDLSKVPPPQTPQ).

The protein belongs to the type IV zinc-finger family. Class C subfamily. As to expression, predominantly expressed in shoot apices, inflorescences and roots.

It is found in the nucleus. In terms of biological role, transcriptional activator that specifically binds 5'-GATA-3' or 5'-GAT-3' motifs within gene promoters. This chain is GATA transcription factor 24 (GATA24), found in Arabidopsis thaliana (Mouse-ear cress).